We begin with the raw amino-acid sequence, 192 residues long: Vascular endothelial growth factor A (192 aa).

The N-terminal stretch at M1–A26 is a signal peptide. 3 disulfides stabilise this stretch: C52/C94, C83/C128, and C87/C130. N-linked (GlcNAc...) asparagine glycosylation is present at N101.

The protein belongs to the PDGF/VEGF growth factor family. As to quaternary structure, homodimer; disulfide-linked. Also found as heterodimer with PGF Interacts with FLT1/VEGFR1 and KDR/VEGFR2 receptors, heparan sulfate and heparin. As to expression, expressed by the venom gland, and probably other tissues.

The protein resides in the secreted. Its function is as follows. Growth factor active in angiogenesis, vasculogenesis and endothelial cell growth. Induces endothelial cell proliferation, promotes cell migration, inhibits apoptosis and induces permeabilization of blood vessels. The protein is Vascular endothelial growth factor A of Vipera ammodytes ammodytes (Western sand viper).